Reading from the N-terminus, the 397-residue chain is Acetate kinase 2 (397 aa).

A Mg(2+)-binding site is contributed by asparagine 10. Lysine 17 provides a ligand contact to ATP. Arginine 90 is a substrate binding site. The active-site Proton donor/acceptor is the aspartate 147. ATP contacts are provided by residues 207–211 (HLGNG), 281–283 (DAR), and 329–333 (GIGEN). Residue glutamate 385 coordinates Mg(2+).

Belongs to the acetokinase family. In terms of assembly, homodimer. The cofactor is Mg(2+). Mn(2+) is required as a cofactor.

The protein localises to the cytoplasm. It carries out the reaction acetate + ATP = acetyl phosphate + ADP. It participates in metabolic intermediate biosynthesis; acetyl-CoA biosynthesis; acetyl-CoA from acetate: step 1/2. Functionally, catalyzes the formation of acetyl phosphate from acetate and ATP. Can also catalyze the reverse reaction. This is Acetate kinase 2 from Aliivibrio fischeri (strain ATCC 700601 / ES114) (Vibrio fischeri).